An 873-amino-acid polypeptide reads, in one-letter code: Alanine--tRNA ligase (873 aa).

Residues histidine 563, histidine 567, cysteine 665, and histidine 669 each coordinate Zn(2+).

The protein belongs to the class-II aminoacyl-tRNA synthetase family. Zn(2+) serves as cofactor.

It localises to the cytoplasm. The enzyme catalyses tRNA(Ala) + L-alanine + ATP = L-alanyl-tRNA(Ala) + AMP + diphosphate. Functionally, catalyzes the attachment of alanine to tRNA(Ala) in a two-step reaction: alanine is first activated by ATP to form Ala-AMP and then transferred to the acceptor end of tRNA(Ala). Also edits incorrectly charged Ser-tRNA(Ala) and Gly-tRNA(Ala) via its editing domain. This Parabacteroides distasonis (strain ATCC 8503 / DSM 20701 / CIP 104284 / JCM 5825 / NCTC 11152) protein is Alanine--tRNA ligase.